Consider the following 243-residue polypeptide: Proteasome subunit beta (243 aa).

Composition is skewed to basic and acidic residues over residues 1–11 and 33–47; these read MRTPTHDEFSG and NADRRADELGDKETK. The propeptide at 1–49 is removed in mature form; by autocatalysis; it reads MRTPTHDEFSGRLDSLNGDRSNVFGPELGEFSNADRRADELGDKETKTG. The disordered stretch occupies residues 1–50; the sequence is MRTPTHDEFSGRLDSLNGDRSNVFGPELGEFSNADRRADELGDKETKTGT. The active-site Nucleophile is threonine 50. A Phosphoserine modification is found at serine 129.

Belongs to the peptidase T1B family. In terms of assembly, the 20S proteasome core is composed of 14 alpha and 14 beta subunits that assemble into four stacked heptameric rings, resulting in a barrel-shaped structure. The two inner rings, each composed of seven catalytic beta subunits, are sandwiched by two outer rings, each composed of seven alpha subunits. H.volcanii produces at least 2 types of 20S proteasomes: an alpha1-beta proteasome and a proteasome containing all three subunits (alpha1, alpha2, and beta) that appears to be asymmetrical with homo-oligomeric alpha1 and alpha2 rings positioned on separate ends. The catalytic chamber with the active sites is on the inside of the barrel. Has probably a gated structure, the ends of the cylinder being occluded by the N-termini of the alpha-subunits. Is likely capped at one or both ends by the proteasome regulatory ATPase, PAN.

It is found in the cytoplasm. It catalyses the reaction Cleavage of peptide bonds with very broad specificity.. The formation of the proteasomal ATPase PAN-20S proteasome complex, via the docking of the C-termini of PAN into the intersubunit pockets in the alpha-rings, triggers opening of the gate for substrate entry. Interconversion between the open-gate and close-gate conformations leads to a dynamic regulation of the 20S proteasome proteolysis activity. In vitro, the chymotrypsin-like activity of the alpha1-beta proteasome is potently inhibited by carbobenzoxyl-leucinyl-leucinyl-leucinal-H (MG132) and significantly by N-acetyl-leucinyl-leucinyl-norleucinal-H (calpain inhibitor I). Functionally, component of the proteasome core, a large protease complex with broad specificity involved in protein degradation. The H.volcanii alpha1-beta proteasome is able to cleave oligopeptides after Phe, Tyr and Trp, poorly after Glu but not after Arg. Thus, displays chymotrypsin-like activity, low caspase-like activity but no trypsin-like activity. The chain is Proteasome subunit beta from Haloferax volcanii (strain ATCC 29605 / DSM 3757 / JCM 8879 / NBRC 14742 / NCIMB 2012 / VKM B-1768 / DS2) (Halobacterium volcanii).